The chain runs to 54 residues: Lectin alpha-1 chain (54 aa).

It belongs to the leguminous lectin family. As to quaternary structure, tetramer of two alpha and two beta chains.

In Lathyrus hirsutus (Rough pea), this protein is Lectin alpha-1 chain.